Reading from the N-terminus, the 938-residue chain is Isoleucine--tRNA ligase (938 aa).

The 'HIGH' region signature appears at 58 to 68; it reads PYANGSIHIGH. Glu561 is a binding site for L-isoleucyl-5'-AMP. A 'KMSKS' region motif is present at residues 602-606; the sequence is KMSKS. Position 605 (Lys605) interacts with ATP. The Zn(2+) site is built by Cys901, Cys904, Cys921, and Cys924.

This sequence belongs to the class-I aminoacyl-tRNA synthetase family. IleS type 1 subfamily. As to quaternary structure, monomer. Zn(2+) is required as a cofactor.

It is found in the cytoplasm. The enzyme catalyses tRNA(Ile) + L-isoleucine + ATP = L-isoleucyl-tRNA(Ile) + AMP + diphosphate. In terms of biological role, catalyzes the attachment of isoleucine to tRNA(Ile). As IleRS can inadvertently accommodate and process structurally similar amino acids such as valine, to avoid such errors it has two additional distinct tRNA(Ile)-dependent editing activities. One activity is designated as 'pretransfer' editing and involves the hydrolysis of activated Val-AMP. The other activity is designated 'posttransfer' editing and involves deacylation of mischarged Val-tRNA(Ile). This Cronobacter sakazakii (strain ATCC BAA-894) (Enterobacter sakazakii) protein is Isoleucine--tRNA ligase.